Here is a 151-residue protein sequence, read N- to C-terminus: Putative phosphatidylglycerol/phosphatidylinositol transfer protein 3 (151 aa).

Positions 1-26 are cleaved as a signal peptide; sequence MKYSQNQIVYVIFFFIILIVVKPIES.

The protein belongs to the NPC2 family. Monomer.

Its function is as follows. Catalyzes the intermembrane transfer of phosphatidylglycerol and phosphatidylinositol. In Dictyostelium discoideum (Social amoeba), this protein is Putative phosphatidylglycerol/phosphatidylinositol transfer protein 3.